The primary structure comprises 900 residues: Trehalose-phosphatase (900 aa).

Disordered stretches follow at residues 76–109 (SRLFNSKNRDKSENGEKGENDLHAKEEREKEEDP) and 874–900 (VKHSDSSIRSEQASARYAMKRQQSYKN). The segment covering 82–108 (KNRDKSENGEKGENDLHAKEEREKEED) has biased composition (basic and acidic residues).

The protein in the C-terminal section; belongs to the trehalose phosphatase family. This sequence in the N-terminal section; belongs to the glycosyltransferase 20 family. Requires Mg(2+) as cofactor.

The enzyme catalyses alpha,alpha-trehalose 6-phosphate + H2O = alpha,alpha-trehalose + phosphate. The protein operates within carbohydrate biosynthesis. In terms of biological role, phosphatase catalytic subunit of the trehalose synthase complex that catalyzes the production of trehalose from glucose-6-phosphate and UDP-alpha-D-glucose in a two step process. This chain is Trehalose-phosphatase, found in Zygosaccharomyces rouxii.